A 209-amino-acid chain; its full sequence is Thymidylate kinase (209 aa).

ATP is bound at residue 10-17; the sequence is GLDGAGKS.

It belongs to the thymidylate kinase family.

The enzyme catalyses dTMP + ATP = dTDP + ADP. Functionally, phosphorylation of dTMP to form dTDP in both de novo and salvage pathways of dTTP synthesis. In Francisella tularensis subsp. holarctica (strain FTNF002-00 / FTA), this protein is Thymidylate kinase.